The primary structure comprises 219 residues: 3,4-dihydroxy-2-butanone 4-phosphate synthase (219 aa).

Residues 28-29, Asp-33, 140-144, and Glu-164 contribute to the D-ribulose 5-phosphate site; these read RE and REGHT. Glu-29 contributes to the Mg(2+) binding site. A Mg(2+)-binding site is contributed by His-143.

Belongs to the DHBP synthase family. As to quaternary structure, homodimer. Mg(2+) is required as a cofactor. It depends on Mn(2+) as a cofactor.

It carries out the reaction D-ribulose 5-phosphate = (2S)-2-hydroxy-3-oxobutyl phosphate + formate + H(+). It participates in cofactor biosynthesis; riboflavin biosynthesis; 2-hydroxy-3-oxobutyl phosphate from D-ribulose 5-phosphate: step 1/1. Functionally, catalyzes the conversion of D-ribulose 5-phosphate to formate and 3,4-dihydroxy-2-butanone 4-phosphate. This Methanocorpusculum labreanum (strain ATCC 43576 / DSM 4855 / Z) protein is 3,4-dihydroxy-2-butanone 4-phosphate synthase.